Consider the following 297-residue polypeptide: Endonuclease G, mitochondrial (297 aa).

A mitochondrion-targeting transit peptide spans 1–48 (MRALRAGLTLASGAGLGAVVEGWRRRREDARAAPGLLGRLPVLPVAAA). Threonine 128 is subject to Phosphothreonine; by GSK3-beta. Histidine 141 (proton acceptor) is an active-site residue. Asparagine 172 is a binding site for Mg(2+). The essential for deoxyribonuclease activity stretch occupies residues 286 to 296 (AGSLKAITAGS). Position 288 is a phosphoserine; by GSK3-beta (serine 288).

This sequence belongs to the DNA/RNA non-specific endonuclease family. In terms of assembly, homodimer; disulfide-linked. Homodimerization is essential for enzyme activity. Interacts with YWHAG. Requires Mg(2+) as cofactor. GSK3-beta-mediated dual phosphorylations at Thr-128 and Ser-288 is necessary for its interaction with YWHAG and the induction of autophagy.

The protein localises to the mitochondrion. In terms of biological role, endonuclease that preferentially catalyzes the cleavage of double-stranded 5-hydroxymethylcytosine (5hmC)-modified DNA. The 5hmC-modified nucleotide does not increase the binding affinity, but instead increases the efficiency of cutting and specifies the site of cleavage for the modified DNAs. Shows significantly higher affinity for four-stranded Holliday junction over duplex and single-stranded DNAs. Promotes conservative recombination when the DNA is 5hmC-modified. Promotes autophagy through the suppression of mTOR by its phosphorylation-mediated interaction with YWHAG and its endonuclease activity-mediated DNA damage response. GSK3-beta mediated phosphorylation of ENDOG enhances its interaction with YWHAG, leading to the release of TSC2 and PIK3C3 from YWHAG resulting in mTOR pathway suppression and autophagy initiation. Promotes cleavage of mtDNA in response to oxidative and nitrosative stress, in turn inducing compensatory mtDNA replication. The sequence is that of Endonuclease G, mitochondrial (ENDOG) from Homo sapiens (Human).